The chain runs to 197 residues: UDP-N-acetylglucosamine transferase subunit ALG13 (197 aa).

The protein belongs to the glycosyltransferase 28 family. Heterodimer with ALG14 to form a functional enzyme.

It is found in the endoplasmic reticulum. The enzyme catalyses an N-acetyl-alpha-D-glucosaminyl-diphospho-di-trans,poly-cis-dolichol + UDP-N-acetyl-alpha-D-glucosamine = an N,N'-diacetylchitobiosyl-diphospho-di-trans,poly-cis-dolichol + UDP + H(+). Its function is as follows. Involved in protein N-glycosylation. Essential for the second step of the dolichol-linked oligosaccharide pathway. The chain is UDP-N-acetylglucosamine transferase subunit ALG13 (ALG13) from Kluyveromyces lactis (strain ATCC 8585 / CBS 2359 / DSM 70799 / NBRC 1267 / NRRL Y-1140 / WM37) (Yeast).